Consider the following 685-residue polypeptide: Polyphosphate kinase (685 aa).

Asparagine 45 is an ATP binding site. Mg(2+) is bound by residues arginine 375 and arginine 405. Histidine 435 serves as the catalytic Phosphohistidine intermediate. ATP is bound by residues tyrosine 468, arginine 564, and histidine 592.

It belongs to the polyphosphate kinase 1 (PPK1) family. It depends on Mg(2+) as a cofactor. Post-translationally, an intermediate of this reaction is the autophosphorylated ppk in which a phosphate is covalently linked to a histidine residue through a N-P bond.

The enzyme catalyses [phosphate](n) + ATP = [phosphate](n+1) + ADP. In terms of biological role, catalyzes the reversible transfer of the terminal phosphate of ATP to form a long-chain polyphosphate (polyP). The chain is Polyphosphate kinase from Neisseria meningitidis serogroup C (strain 053442).